The chain runs to 188 residues: Protein-export protein SecB (188 aa).

Disordered stretches follow at residues 1-21 and 160-188; these read MADEQPQGNGQGAAQQGEQPK and RQKAEQAQGGGAEAKGSDSTAAQGSDTQQ. Polar residues predominate over residues 176 to 188; sequence SDSTAAQGSDTQQ.

The protein belongs to the SecB family. Homotetramer, a dimer of dimers. One homotetramer interacts with 1 SecA dimer.

It is found in the cytoplasm. Its function is as follows. One of the proteins required for the normal export of preproteins out of the cell cytoplasm. It is a molecular chaperone that binds to a subset of precursor proteins, maintaining them in a translocation-competent state. It also specifically binds to its receptor SecA. The chain is Protein-export protein SecB from Alkalilimnicola ehrlichii (strain ATCC BAA-1101 / DSM 17681 / MLHE-1).